We begin with the raw amino-acid sequence, 188 residues long: Deoxycytidylate deaminase (188 aa).

The CMP/dCMP-type deaminase domain occupies 1-171; that stretch reads MKASTVLQIA…DILRNAGIEV (171 aa). Zn(2+)-binding residues include Cys19, Cys49, His94, Glu102, and His104. The Proton donor role is filled by Glu106. Positions 132 and 135 each coordinate Zn(2+).

The protein belongs to the cytidine and deoxycytidylate deaminase family. As to quaternary structure, homohexamer. The cofactor is Zn(2+).

It catalyses the reaction dCMP + H2O + H(+) = dUMP + NH4(+). Its activity is regulated as follows. Allosteric enzyme whose activity is greatly influenced by the end products of its metabolic pathway, dCTP and dTTP. In terms of biological role, supplies the nucleotide substrate for thymidylate synthetase. The sequence is that of Deoxycytidylate deaminase (CD) from Enterobacteria phage T2 (Bacteriophage T2).